A 605-amino-acid polypeptide reads, in one-letter code: Aspartate--tRNA(Asp/Asn) ligase (605 aa).

E172 contributes to the L-aspartate binding site. The segment at 196-199 (QLFK) is aspartate. Position 218 (R218) interacts with L-aspartate. ATP is bound by residues 218–220 (RDE) and Q227. H455 provides a ligand contact to L-aspartate. E489 contributes to the ATP binding site. Residue R496 participates in L-aspartate binding. Residue 541–544 (GLDR) coordinates ATP.

The protein belongs to the class-II aminoacyl-tRNA synthetase family. Type 1 subfamily. Homodimer.

It is found in the cytoplasm. It carries out the reaction tRNA(Asx) + L-aspartate + ATP = L-aspartyl-tRNA(Asx) + AMP + diphosphate. Functionally, aspartyl-tRNA synthetase with relaxed tRNA specificity since it is able to aspartylate not only its cognate tRNA(Asp) but also tRNA(Asn). Reaction proceeds in two steps: L-aspartate is first activated by ATP to form Asp-AMP and then transferred to the acceptor end of tRNA(Asp/Asn). This is Aspartate--tRNA(Asp/Asn) ligase from Ralstonia nicotianae (strain ATCC BAA-1114 / GMI1000) (Ralstonia solanacearum).